A 73-amino-acid polypeptide reads, in one-letter code: Large ribosomal subunit protein bL28 (73 aa).

This sequence belongs to the bacterial ribosomal protein bL28 family.

This is Large ribosomal subunit protein bL28 from Anaeromyxobacter sp. (strain Fw109-5).